The sequence spans 442 residues: Endothelin receptor type B (442 aa).

An N-terminal signal peptide occupies residues 1 to 26 (MQPPPSLCGRALVALVLACGLSRIWG). Residues 27 to 101 (EERGFPPDRA…GPIEIKETFK (75 aa)) lie on the Extracellular side of the membrane. An N-linked (GlcNAc...) asparagine glycan is attached at Asn-59. Residues 69–88 (AEVPKGDRTAGSPPRTISPP) form a disordered region. The helical transmembrane segment at 102–126 (YINTVVSCLVFVLGIIGNSTLLRII) threads the bilayer. Residues 127 to 137 (YKNKCMRNGPN) lie on the Cytoplasmic side of the membrane. Residues 138-163 (ILIASLALGDLLHIVIDIPINVYKLL) form a helical membrane-spanning segment. Over 164–175 (AEDWPFGAEMCK) the chain is Extracellular. A disulfide bond links Cys-174 and Cys-255. A helical transmembrane segment spans residues 176 to 197 (LVPFIQKASVGITVLSLCALSI). Residues 198–218 (DRYRAVASWSRIKGIGVPKWT) are Cytoplasmic-facing. The chain crosses the membrane as a helical span at residues 219–243 (AVEIVLIWVVSVVLAVPEAIGFDII). At 244–271 (TMDYKGSYLRICLLHPVQKTAFMQFYKT) the chain is on the extracellular side. The chain crosses the membrane as a helical span at residues 272–296 (AKDWWLFSFYFCLPLAITAFFYTLM). Over 297 to 324 (TCEMLRKKSGMQIALNDHLKQRREVAKT) the chain is Cytoplasmic. Position 305 is a phosphoserine (Ser-305). Residues 325 to 350 (VFCLVLVFALCWLPLHLSRILKLTLY) traverse the membrane as a helical segment. Residues 351–362 (NQNDPNRCELLS) lie on the Extracellular side of the membrane. Residues 363 to 389 (FLLVLDYIGINMASLNSCINPIALYLV) traverse the membrane as a helical segment. Over 390–442 (SKRFKNCFKSCLCCWCQSFEEKQSLEEKQSCLKFKANDHGYDNFRSSNKYSSS) the chain is Cytoplasmic. S-palmitoyl cysteine attachment occurs at residues Cys-402, Cys-403, and Cys-405. Residue Ser-419 is modified to Phosphoserine. Tyr-439 carries the phosphotyrosine modification. A phosphoserine mark is found at Ser-440, Ser-441, and Ser-442.

The protein belongs to the G-protein coupled receptor 1 family. Endothelin receptor subfamily. EDNRB sub-subfamily. In terms of processing, palmitoylation of Cys-402 was confirmed by the palmitoylation of Cys-402 in a deletion mutant lacking both Cys-403 and Cys-405. As to expression, expressed in placental stem villi vessels, but not in cultured placental villi smooth muscle cells.

It localises to the cell membrane. Non-specific receptor for endothelin 1, 2, and 3. Mediates its action by association with G proteins that activate a phosphatidylinositol-calcium second messenger system. The polypeptide is Endothelin receptor type B (Homo sapiens (Human)).